The primary structure comprises 557 residues: Hdr-like menaquinol oxidoreductase iron-sulfur subunit (557 aa).

4Fe-4S ferredoxin-type domains are found at residues 86–115 (RAFK…GDPK) and 155–184 (KEWY…AEVV). Residues Cys95, Cys98, Cys101, Cys105, Cys164, Cys167, Cys170, and Cys174 each contribute to the [4Fe-4S] cluster site.

It depends on [4Fe-4S] cluster as a cofactor.

The protein resides in the membrane. Its function is as follows. Has menaquinol-oxidizing activity. The HmeC and HmeD subunits may together mediate electron transfer from menaquinol to an unidentified electron acceptor on the cytoplasmic side of the membrane. In Archaeoglobus profundus (strain DSM 5631 / JCM 9629 / NBRC 100127 / Av18), this protein is Hdr-like menaquinol oxidoreductase iron-sulfur subunit (hmeD).